The chain runs to 678 residues: Zinc finger translocation-associated protein (678 aa).

4 disordered regions span residues 1-100 (MEPG…PGRD), 182-250 (LGVQ…GSRG), 329-417 (QPEA…HRRH), and 490-583 (LGPP…NYQP). Residues 62–78 (SAPLPSSRARGPASSGR) are compositionally biased toward low complexity. A compositionally biased stretch (basic and acidic residues) spans 79–88 (KYSDHCEARA). Residues 187 to 201 (AEEEEEEEEEEEEEG) show a composition bias toward acidic residues. K375 participates in a covalent cross-link: Glycyl lysine isopeptide (Lys-Gly) (interchain with G-Cter in SUMO2). Over residues 388–398 (AEEEEELEEGE) the composition is skewed to acidic residues. A compositionally biased stretch (pro residues) spans 492–504 (PPRPESPQGPIPP). Composition is skewed to acidic residues over residues 513–529 (GGGD…EEWG) and 543–553 (AEEEEDEEDGQ). Positions 560–572 (LPPPPPPPPPPPP) are enriched in pro residues. Residues 573–583 (RSREQRRNYQP) are compositionally biased toward basic and acidic residues.

The chain is Zinc finger translocation-associated protein from Homo sapiens (Human).